A 217-amino-acid chain; its full sequence is Probable cutinase 3 (217 aa).

The N-terminal stretch at 1-17 is a signal peptide; it reads MSLRSLFVAGLATLALA. 2 disulfide bridges follow: C39/C118 and C65/C79. The Nucleophile role is filled by S129. A disulfide bridge connects residues C180 and C187. The active site involves D184. The active-site Proton donor/acceptor is the H197.

The protein belongs to the cutinase family.

The protein resides in the secreted. The catalysed reaction is cutin + H2O = cutin monomers.. In terms of biological role, catalyzes the hydrolysis of complex carboxylic polyesters found in the cell wall of plants. Degrades cutin, a macromolecule that forms the structure of the plant cuticle. The polypeptide is Probable cutinase 3 (Neosartorya fischeri (strain ATCC 1020 / DSM 3700 / CBS 544.65 / FGSC A1164 / JCM 1740 / NRRL 181 / WB 181) (Aspergillus fischerianus)).